A 629-amino-acid polypeptide reads, in one-letter code: ATP-dependent RNA helicase DeaD (629 aa).

The Q motif motif lies at 6-34; that stretch reads TTFADLGLKAPILEALNDLGYEKPSPIQA. One can recognise a Helicase ATP-binding domain in the interval 37–208; that stretch reads IPHLLNGRDV…RRFMKEPQEV (172 aa). ATP is bound at residue 50-57; that stretch reads AQTGSGKT. A DEAD box motif is present at residues 156 to 159; it reads DEAD. Residues 232 to 379 form the Helicase C-terminal domain; that stretch reads KNEALVRFLE…EVELPNAELL (148 aa). Disordered regions lie at residues 438–481 and 560–629; these read LIVP…RERR and LGDA…GGDA. Basic and acidic residues-rich tracts occupy residues 446-481 and 568-629; these read MRPK…RERR and GGER…GGDA.

Belongs to the DEAD box helicase family. DeaD/CsdA subfamily. In terms of assembly, interacts with the 50S ribosomal subunit upon shifting to 15 degrees Celsius. Also found associated with the RNA degradosome at 15 degrees Celsius; binds RNase E (rne).

The protein resides in the cytoplasm. The enzyme catalyses ATP + H2O = ADP + phosphate + H(+). Its function is as follows. DEAD-box RNA helicase involved in various cellular processes at low temperature, including ribosome biogenesis, mRNA degradation and translation initiation. Exhibits RNA-stimulated ATP hydrolysis and RNA unwinding activity at low temperature. Involved in 50S ribosomal subunit assembly, acting after SrmB, and could also play a role in the biogenesis of the 30S ribosomal subunit. In addition, is involved in mRNA decay, via formation of a cold-shock degradosome with RNase E. Also stimulates translation of some mRNAs, probably at the level of initiation. The chain is ATP-dependent RNA helicase DeaD from Escherichia coli (strain K12).